The chain runs to 69 residues: Conotoxin Eb6.19 (69 aa).

The signal sequence occupies residues 1–17 (VLIIAVLFLTACQLTTA). Positions 18–41 (ETYSRGRQKHRARRSTDKNSKWTR) are excised as a propeptide. Disulfide bonds link C43–C57, C50–C61, and C56–C68.

This sequence belongs to the conotoxin O1 superfamily. Expressed by the venom duct.

It localises to the secreted. In Conus ebraeus (Hebrew cone), this protein is Conotoxin Eb6.19 (E1).